Reading from the N-terminus, the 392-residue chain is MKKLLKSALLFAAAGSALSLQALPVGNPAEPSLLIDGTMWEGASGDPCDPCATWCDAISIRAGFYGDYVFDRILKVDVNKTISGMAAAPTAASGTASNTTVAADRSNFAYGKHLQDAEWCTNAAYLALNIWDRFDVFCTLGASNGYFKASSDAFNLVGLIGLAGTDFANQRPNVEISQGIVELYTDTAFSWSVGARGALWECGCATLGAEFQYAQSNPKIEMLNVTSSPAQFMIHKPRGYKGTAANFPLPVAAGTATATDTKSATVKYHEWQVGLALSYRLNMLVPYIGVNWSRATFDADTIRIAQPKLASAILNLTTWNPTLLGVATTLDTSNKYADFMQIVSMQINKMKSRKACGIAVGATLIDADKWSITGEARLIDERAAHINAQFRF.

The N-terminal stretch at 1–22 (MKKLLKSALLFAAAGSALSLQA) is a signal peptide.

This sequence belongs to the chlamydial porin (CP) (TC 1.B.2) family. In terms of assembly, part of a disulfide cross-linked outer membrane complex (COMC) composed of the major outer membrane porin (MOMP), the small cysteine-rich protein (OmcA) and the large cysteine-rich periplasmic protein (OmcB).

It is found in the cell outer membrane. In terms of biological role, in elementary bodies (EBs, the infectious stage, which is able to survive outside the host cell) provides the structural integrity of the outer envelope through disulfide cross-links with the small cysteine-rich protein and the large cysteine-rich periplasmic protein. It has been described in publications as the Sarkosyl-insoluble COMC (Chlamydia outer membrane complex), and serves as the functional equivalent of peptidoglycan. Functionally, permits diffusion of specific solutes through the outer membrane. In Chlamydia psittaci (Chlamydophila psittaci), this protein is Major outer membrane porin (ompA).